A 78-amino-acid chain; its full sequence is Protein SlyX homolog (78 aa).

The protein belongs to the SlyX family.

The sequence is that of Protein SlyX homolog from Xylella fastidiosa (strain M23).